The sequence spans 258 residues: Isoprenyl transferase (258 aa).

D38 is a catalytic residue. D38 is a Mg(2+) binding site. Substrate contacts are provided by residues 39 to 42, W43, R51, H55, and 83 to 85; these read GNGR and STE. The Proton acceptor role is filled by N86. Residues W87, R89, R206, and 212–214 each bind substrate; that span reads RIS. E225 serves as a coordination point for Mg(2+).

It belongs to the UPP synthase family. As to quaternary structure, homodimer. Mg(2+) is required as a cofactor.

Catalyzes the condensation of isopentenyl diphosphate (IPP) with allylic pyrophosphates generating different type of terpenoids. The chain is Isoprenyl transferase from Bacillus cereus (strain ATCC 14579 / DSM 31 / CCUG 7414 / JCM 2152 / NBRC 15305 / NCIMB 9373 / NCTC 2599 / NRRL B-3711).